A 301-amino-acid chain; its full sequence is ATP synthase gamma chain (301 aa).

The protein belongs to the ATPase gamma chain family. F-type ATPases have 2 components, CF(1) - the catalytic core - and CF(0) - the membrane proton channel. CF(1) has five subunits: alpha(3), beta(3), gamma(1), delta(1), epsilon(1). CF(0) has three main subunits: a, b and c.

The protein resides in the cell inner membrane. In terms of biological role, produces ATP from ADP in the presence of a proton gradient across the membrane. The gamma chain is believed to be important in regulating ATPase activity and the flow of protons through the CF(0) complex. The protein is ATP synthase gamma chain of Helicobacter pylori (strain Shi470).